The sequence spans 329 residues: Ubiquitin carboxyl-terminal hydrolase isozyme L5 (329 aa).

The UCH catalytic domain occupies 7–225 (EWCLMESDPG…IRFNLMAIVS (219 aa)). Lys-47 is modified (N6-succinyllysine). Cys-88 (nucleophile) is an active-site residue. Lys-158 is modified (N6-acetyllysine). The Proton donor role is filled by His-164. Residue Lys-289 is modified to N6-succinyllysine. Residues 291-319 (NYLPFIMELLKTLAEHQQLIPLVEKAKEK) enclose the ULD domain. The tract at residues 313–329 (VEKAKEKQNAKKAQETK) is interaction with ADRM1.

This sequence belongs to the peptidase C12 family. As to quaternary structure, component of the 19S (PA700) regulatory complex of the 26S proteasome. Interacts with ADRM1 and NFRKB. Component of the INO80 complex; specifically part of a complex module associated with N-terminus of INO80.

The protein localises to the cytoplasm. Its subcellular location is the nucleus. The enzyme catalyses Thiol-dependent hydrolysis of ester, thioester, amide, peptide and isopeptide bonds formed by the C-terminal Gly of ubiquitin (a 76-residue protein attached to proteins as an intracellular targeting signal).. With respect to regulation, activated by ADRM1. Inhibited by interaction with NFRKB. In terms of biological role, protease that specifically cleaves 'Lys-48'-linked polyubiquitin chains. Deubiquitinating enzyme associated with the 19S regulatory subunit of the 26S proteasome. Putative regulatory component of the INO80 complex; however is inactive in the INO80 complex and is activated by a transient interaction of the INO80 complex with the proteasome via ADRM1. The protein is Ubiquitin carboxyl-terminal hydrolase isozyme L5 (Uchl5) of Mus musculus (Mouse).